A 212-amino-acid polypeptide reads, in one-letter code: External core antigen (212 aa).

Positions 1 to 19 (MQLFHLCLIISCSCPTVQA) are cleaved as a signal peptide. Residues 25-27 (GWL) form an HBEAG region. The disordered stretch occupies residues 165–212 (NAPILSTLPETTVVRRRGRSPRRRTPSPRRRRSQSPRRRRSQSRESQC). A compositionally biased stretch (basic residues) spans 178-205 (VRRRGRSPRRRTPSPRRRRSQSPRRRRS). A 1; half-length repeat occupies 184–190 (SPRRRTP). A 3 X 8 AA repeats of S-P-R-R-R-R-S-Q region spans residues 184–206 (SPRRRTPSPRRRRSQSPRRRRSQ). Positions 184–212 (SPRRRTPSPRRRRSQSPRRRRSQSRESQC) are excised as a propeptide. 2 repeat units span residues 191–198 (SPRRRRSQ) and 199–206 (SPRRRRSQ).

It belongs to the orthohepadnavirus precore antigen family. In terms of assembly, homodimerizes. Post-translationally, phosphorylated. In terms of processing, cleaved by host furin.

It is found in the secreted. It localises to the host nucleus. May regulate immune response to the intracellular capsid in acting as a T-cell tolerogen, by having an immunoregulatory effect which prevents destruction of infected cells by cytotoxic T-cells. This immune regulation may predispose to chronicity during perinatal infections and prevent severe liver injury during adult infections. The chain is External core antigen from Homo sapiens (Human).